The sequence spans 66 residues: Small ribosomal subunit protein eS27 (66 aa).

Positions 21, 24, 40, and 43 each coordinate Zn(2+). Residues 21-43 (CPNCGNEQTIFSHATFPVRCLSC) form a C4-type zinc finger.

The protein belongs to the eukaryotic ribosomal protein eS27 family. As to quaternary structure, part of the 30S ribosomal subunit. The cofactor is Zn(2+).

The polypeptide is Small ribosomal subunit protein eS27 (Saccharolobus solfataricus (strain ATCC 35092 / DSM 1617 / JCM 11322 / P2) (Sulfolobus solfataricus)).